The sequence spans 872 residues: Alanine--tRNA ligase (872 aa).

Zn(2+) is bound by residues His558, His562, Cys660, and His664.

It belongs to the class-II aminoacyl-tRNA synthetase family. It depends on Zn(2+) as a cofactor.

The protein localises to the cytoplasm. It carries out the reaction tRNA(Ala) + L-alanine + ATP = L-alanyl-tRNA(Ala) + AMP + diphosphate. In terms of biological role, catalyzes the attachment of alanine to tRNA(Ala) in a two-step reaction: alanine is first activated by ATP to form Ala-AMP and then transferred to the acceptor end of tRNA(Ala). Also edits incorrectly charged Ser-tRNA(Ala) and Gly-tRNA(Ala) via its editing domain. This is Alanine--tRNA ligase from Chlamydia pneumoniae (Chlamydophila pneumoniae).